Reading from the N-terminus, the 192-residue chain is Fe/S biogenesis protein NfuA (192 aa).

Residues Cys-149 and Cys-152 each contribute to the [4Fe-4S] cluster site.

Belongs to the NfuA family. In terms of assembly, homodimer. The cofactor is [4Fe-4S] cluster.

Involved in iron-sulfur cluster biogenesis. Binds a 4Fe-4S cluster, can transfer this cluster to apoproteins, and thereby intervenes in the maturation of Fe/S proteins. Could also act as a scaffold/chaperone for damaged Fe/S proteins. In Idiomarina loihiensis (strain ATCC BAA-735 / DSM 15497 / L2-TR), this protein is Fe/S biogenesis protein NfuA.